Here is an 885-residue protein sequence, read N- to C-terminus: Lon protease homolog 2, peroxisomal (885 aa).

The Lon N-terminal domain occupies 12–256 (LAVLPFRNKV…KATELVDRHL (245 aa)). Positions 70 to 104 (LLSPGVGSDSGEGGSKVGGSAVESSKQDTKNGKEP) are disordered. Positions 77 to 86 (SDSGEGGSKV) are enriched in gly residues. Over residues 94 to 104 (SKQDTKNGKEP) the composition is skewed to basic and acidic residues. 409-416 (GPPGVGKT) contributes to the ATP binding site. Residues 690–875 (VASPGVSVGL…EEVLDHAFEG (186 aa)) enclose the Lon proteolytic domain. Catalysis depends on residues serine 781 and lysine 824. The short motif at 883–885 (SKL) is the Microbody targeting signal element.

It belongs to the peptidase S16 family.

The protein localises to the peroxisome matrix. The catalysed reaction is Hydrolysis of proteins in presence of ATP.. In terms of biological role, ATP-dependent serine protease that mediates the selective degradation of misfolded and unassembled polypeptides in the peroxisomal matrix. Necessary for type 2 peroxisome targeting signal (PTS2)-containing protein processing and facilitates peroxisome matrix protein import. This Zea mays (Maize) protein is Lon protease homolog 2, peroxisomal (LON1).